The chain runs to 579 residues: 2-isopropylmalate synthase (579 aa).

Positions 40–314 (PRWCAVDLRD…DPMIDFSDID (275 aa)) constitute a Pyruvate carboxyltransferase domain. Mg(2+) is bound by residues D49, H253, H255, and N289. The segment at 456–579 (SGKADGQWGR…VNRAIRDAQS (124 aa)) is regulatory domain.

Belongs to the alpha-IPM synthase/homocitrate synthase family. LeuA type 2 subfamily. As to quaternary structure, homodimer. It depends on Mg(2+) as a cofactor.

Its subcellular location is the cytoplasm. It carries out the reaction 3-methyl-2-oxobutanoate + acetyl-CoA + H2O = (2S)-2-isopropylmalate + CoA + H(+). The protein operates within amino-acid biosynthesis; L-leucine biosynthesis; L-leucine from 3-methyl-2-oxobutanoate: step 1/4. Its function is as follows. Catalyzes the condensation of the acetyl group of acetyl-CoA with 3-methyl-2-oxobutanoate (2-ketoisovalerate) to form 3-carboxy-3-hydroxy-4-methylpentanoate (2-isopropylmalate). This is 2-isopropylmalate synthase from Pseudarthrobacter chlorophenolicus (strain ATCC 700700 / DSM 12829 / CIP 107037 / JCM 12360 / KCTC 9906 / NCIMB 13794 / A6) (Arthrobacter chlorophenolicus).